A 367-amino-acid chain; its full sequence is Phosphoribosylaminoimidazole-succinocarboxamide synthase (367 aa).

The protein belongs to the SAICAR synthetase family.

It carries out the reaction 5-amino-1-(5-phospho-D-ribosyl)imidazole-4-carboxylate + L-aspartate + ATP = (2S)-2-[5-amino-1-(5-phospho-beta-D-ribosyl)imidazole-4-carboxamido]succinate + ADP + phosphate + 2 H(+). It functions in the pathway purine metabolism; IMP biosynthesis via de novo pathway; 5-amino-1-(5-phospho-D-ribosyl)imidazole-4-carboxamide from 5-amino-1-(5-phospho-D-ribosyl)imidazole-4-carboxylate: step 1/2. The protein is Phosphoribosylaminoimidazole-succinocarboxamide synthase of Vibrio campbellii (strain ATCC BAA-1116).